The following is a 479-amino-acid chain: Ribulose bisphosphate carboxylase large chain (479 aa).

Positions 1 to 2 (MS) are excised as a propeptide. Substrate-binding residues include Asn-123 and Thr-173. The Proton acceptor role is filled by Lys-175. A substrate-binding site is contributed by Lys-177. Mg(2+)-binding residues include Lys-201, Asp-203, and Glu-204. Lys-201 carries the N6-carboxylysine modification. Ser-208 carries the phosphoserine modification. Catalysis depends on His-294, which acts as the Proton acceptor. The substrate site is built by Arg-295 and His-327. Thr-330 bears the Phosphothreonine mark. Ser-379 is a binding site for substrate.

This sequence belongs to the RuBisCO large chain family. Type I subfamily. Heterohexadecamer of 8 large chains and 8 small chains; disulfide-linked. The disulfide link is formed within the large subunit homodimers. Mg(2+) serves as cofactor. Post-translationally, the disulfide bond which can form in the large chain dimeric partners within the hexadecamer appears to be associated with oxidative stress and protein turnover.

The protein localises to the plastid. It is found in the chloroplast. It catalyses the reaction 2 (2R)-3-phosphoglycerate + 2 H(+) = D-ribulose 1,5-bisphosphate + CO2 + H2O. It carries out the reaction D-ribulose 1,5-bisphosphate + O2 = 2-phosphoglycolate + (2R)-3-phosphoglycerate + 2 H(+). RuBisCO catalyzes two reactions: the carboxylation of D-ribulose 1,5-bisphosphate, the primary event in carbon dioxide fixation, as well as the oxidative fragmentation of the pentose substrate in the photorespiration process. Both reactions occur simultaneously and in competition at the same active site. The polypeptide is Ribulose bisphosphate carboxylase large chain (Capsella bursa-pastoris (Shepherd's purse)).